The following is a 278-amino-acid chain: Pantothenate synthetase (278 aa).

30 to 37 (MGGLHQGH) is a binding site for ATP. Histidine 37 serves as the catalytic Proton donor. Glutamine 61 lines the (R)-pantoate pocket. Residue glutamine 61 participates in beta-alanine binding. 146–149 (GQKD) provides a ligand contact to ATP. Glutamine 152 lines the (R)-pantoate pocket. ATP is bound by residues isoleucine 175 and 183-186 (MSTR).

Belongs to the pantothenate synthetase family. As to quaternary structure, homodimer.

Its subcellular location is the cytoplasm. It carries out the reaction (R)-pantoate + beta-alanine + ATP = (R)-pantothenate + AMP + diphosphate + H(+). Its pathway is cofactor biosynthesis; (R)-pantothenate biosynthesis; (R)-pantothenate from (R)-pantoate and beta-alanine: step 1/1. Catalyzes the condensation of pantoate with beta-alanine in an ATP-dependent reaction via a pantoyl-adenylate intermediate. The sequence is that of Pantothenate synthetase from Ruthia magnifica subsp. Calyptogena magnifica.